The sequence spans 445 residues: Chromosome partition protein MukF (445 aa).

The segment at 213–241 (LSETSATLKELQDTLQAAGDELQTQILDI) is leucine-zipper.

This sequence belongs to the MukF family. Interacts, and probably forms a ternary complex, with MukE and MukB via its C-terminal region. The complex formation is stimulated by calcium or magnesium. It is required for an interaction between MukE and MukB.

It is found in the cytoplasm. Its subcellular location is the nucleoid. Functionally, involved in chromosome condensation, segregation and cell cycle progression. May participate in facilitating chromosome segregation by condensation DNA from both sides of a centrally located replisome during cell division. Not required for mini-F plasmid partitioning. Probably acts via its interaction with MukB and MukE. Overexpression results in anucleate cells. It has a calcium binding activity. The polypeptide is Chromosome partition protein MukF (Vibrio atlanticus (strain LGP32) (Vibrio splendidus (strain Mel32))).